We begin with the raw amino-acid sequence, 557 residues long: Leucine-rich glioma-inactivated protein 1 (557 aa).

The N-terminal stretch at 1–34 (MESERSKRMGNACIPLKRIAYFLCLLSALLLTEG) is a signal peptide. Positions 35–72 (KKPAKPKCPAVCTCTKDNALCENARSIPRTVPPDVISL) constitute an LRRNT domain. 3 LRR repeats span residues 92-113 (SLQL…AFIG), 116-137 (HLEY…TFRG), and 140-161 (SLIH…IFKG). Residues 173 to 223 (NSFNCDCKLKWLVEWLGHTNATVEDIYCEGPPEYKKRKINSLSSKDFDCII) enclose the LRRCT domain. An N-linked (GlcNAc...) asparagine glycan is attached at N192. EAR repeat units lie at residues 225 to 267 (EFAK…EWDH), 271 to 313 (TFRN…KRDS), 317 to 364 (KFIK…KWNG), 366 to 415 (GFYS…QWNK), 419 to 462 (SFTN…KWGG), 464 to 506 (SFQD…NWDA), and 510 to 552 (KFVK…KHVI). N277 carries an N-linked (GlcNAc...) asparagine glycan. A glycan (N-linked (GlcNAc...) asparagine) is linked at N422.

Oligomer. Interacts with KCNA1 within a complex containing KCNA1, KCNA4 and KCNAB1. Part of a complex containing ADAM22, DLG4/PSD95 and CACNG2 (stargazin). Can bind to ADAM11 and ADAM23. In terms of processing, glycosylated.

The protein resides in the secreted. It localises to the synapse. Its subcellular location is the cytoplasm. In terms of biological role, regulates voltage-gated potassium channels assembled from KCNA1, KCNA4 and KCNAB1. It slows down channel inactivation by precluding channel closure mediated by the KCNAB1 subunit. Ligand for ADAM22 that positively regulates synaptic transmission mediated by AMPA-type glutamate receptors. Plays a role in suppressing the production of MMP1/3 through the phosphatidylinositol 3-kinase/ERK pathway. The polypeptide is Leucine-rich glioma-inactivated protein 1 (LGI1) (Pan troglodytes (Chimpanzee)).